A 493-amino-acid chain; its full sequence is Probable cytosol aminopeptidase (493 aa).

Residues Lys-257 and Asp-262 each coordinate Mn(2+). Lys-269 is a catalytic residue. Mn(2+) contacts are provided by Asp-281, Asp-341, and Glu-343. Arg-345 is a catalytic residue.

The protein belongs to the peptidase M17 family. Mn(2+) serves as cofactor.

It is found in the cytoplasm. The catalysed reaction is Release of an N-terminal amino acid, Xaa-|-Yaa-, in which Xaa is preferably Leu, but may be other amino acids including Pro although not Arg or Lys, and Yaa may be Pro. Amino acid amides and methyl esters are also readily hydrolyzed, but rates on arylamides are exceedingly low.. The enzyme catalyses Release of an N-terminal amino acid, preferentially leucine, but not glutamic or aspartic acids.. In terms of biological role, presumably involved in the processing and regular turnover of intracellular proteins. Catalyzes the removal of unsubstituted N-terminal amino acids from various peptides. The chain is Probable cytosol aminopeptidase from Prochlorococcus marinus (strain MIT 9211).